The sequence spans 1026 residues: Retinoblastoma-related protein 1 (1026 aa).

Positions 416–616 are domain A; sequence TPVSTAMTTA…EKGSSMYNSL (201 aa). A pocket region spans residues 416–872; that stretch reads TPVSTAMTTA…NEVFIPSVKP (457 aa). The tract at residues 617–737 is spacer; it reads AVARPALSVE…PGGGGETCAE (121 aa). The tract at residues 656–680 is disordered; sequence PVPSLPKPEPMSAQNGDPRSPKRPC. A domain B region spans residues 738–872; it reads TGISVFFSKI…NEVFIPSVKP (135 aa). The tract at residues 1007–1026 is disordered; sequence QNGSSASSSGAPLKSEQPDS.

Belongs to the retinoblastoma protein (RB) family.

The protein localises to the nucleus. In terms of biological role, regulator of biological processes that recruits a histone deacetylase to control gene transcription. May play a role in the entry into mitosis, negatively regulating the cell proliferation. Formation of stable complexes with geminiviridae replication-associated proteins may create a cellular environment which favors viral DNA replication. The protein is Retinoblastoma-related protein 1 (RBR1) of Pisum sativum (Garden pea).